The sequence spans 1076 residues: MQCLLREKPRSLALVNKDHALMFHSVPQNKNSLSVCVAEFTALSEKPLEGFRKISSHRIYGTLGLIELEGSNFLCVISGASEVARVRDKERVFRIMEVCFYSVNRSNWDHIRQENYSPDIPDGYDTDTQGYDSYKYAAEPFSSLRKLLTNGSFYFSLDFDITTRLQLRTSQTMTEPQYDSMHTQFMWNEFMLRQLIKFRSHLNGDEKSALDGCRFFTCAIRGFASTEQFKLGIQTIRLSLISRLSSLRAGTRFLSRGVDDDGNVANFVETETILDSSKYCVSYCQVRGSIPIFWEQEGVQMFGQKIDITRSLEATRAAFEKHFTSLIEEYGPVHIINLLGTGSGERSLSERLRQHIQLSPEKDLIHLTEFDYHSQIRSFEDANKIRPMIYSDAETFGFYFENNEGQSIVVQDGVFRTNCLDCLDRTNVIQNLVSRVFLEQVMIYTRQNAGYDFWQVHSTIWANNGDALARIYTGTGALKSSFTRKGKLSIAGALNDLSKSVGRMYINNFQDKGRQETIDLLLGRLIDQHPVILYDPIHEYVNHELRKRENEFSEHKNVKIFVASYNLNGCSATTKLENWLFPENTPLADIYVVGFQEIVQLTPQQVISADPAKRREWESCVKRLLNGKCTSGPGYVQLRSGQLVGTALMIFCKESCLPSIKNVEGTVKKTGLGGVSGNKGAVAIRFDYEDTGLCFITSHLAAGYTNYDERDHDYRTIASGLRFRRGRSIFNHDYVVWFGDFNYRISLTYEEVVPCIAQGKLSYLFEYDQLNKQMLTGKVFPFFSELPITFPPTYKFDIGTDIYDTSDKHRVPAWTDRILYRGELVPHSYQSVPLYYSDHRPIYATYEANIVKVDREKKKILFEELYNQRKQEVRDASQTSYTLIDIAGSVAGKPNLIPHLPANGVDKIKQPSSERSKWWFDDGLPAKSIAAPPGPEYRLNPSRPINPFEPTAEPDWISNTKQSFDKKSSLIDSIPALSPAPSSLARSSVSSQRSSTSIIPIKPNKPTKPDHLVAPRVKPLLPPRSGSSSSGVPAPNLTPVNVPPTPPPRKSSASQRSGDLLASSPEESSISWKPLV.

An SAC domain is found at 144–474; sequence LRKLLTNGSF…GDALARIYTG (331 aa). The interval 534 to 880 is catalytic; it reads YDPIHEYVNH…QEVRDASQTS (347 aa). Disordered regions lie at residues 930–958 and 977–1076; these read AAPP…DWIS and LSPA…KPLV. Composition is skewed to low complexity over residues 977–1004 and 1025–1040; these read LSPA…IKPN and SGSS…LTPV. Residues 1065-1076 are compositionally biased toward polar residues; that stretch reads PEESSISWKPLV.

Belongs to the synaptojanin family. This sequence in the central section; belongs to the inositol 1,4,5-trisphosphate 5-phosphatase family. Requires Mg(2+) as cofactor.

It localises to the cytoplasm. It catalyses the reaction a 1,2-diacyl-sn-glycero-3-phospho-(1D-myo-inositol-4,5-bisphosphate) + H2O = a 1,2-diacyl-sn-glycero-3-phospho-(1D-myo-inositol 4-phosphate) + phosphate. Controls the cellular levels and subcellular distribution of phosphatidylinositol 3-phosphate and phosphatidylinositol 4,5-bisphosphate. Involved in distinct membrane trafficking and signal transduction pathways. Highly active against a range of soluble and lipid inositol phosphates. Active in dephosphorylating the 5-position of Ins(1,4,5)P3 and Ins(1,3,4,5)P4 and to a lesser extent Ins(1,4,5,6)P4. The enzyme is also active against PI(4,5)P2 presented in sonicated vesicles and Triton mixed micelles, and somewhat less active against PI(3,5)P2 in unilamellar vesicles. Activity against PI(3,5)P2 drops sharply when this substrate is presented in mixed micelles. Also hydrolyzes PIP3 to produce PI(3,4)P2. This Schizosaccharomyces pombe (strain 972 / ATCC 24843) (Fission yeast) protein is Inositol-1,4,5-trisphosphate 5-phosphatase 1 (syj1).